Here is a 533-residue protein sequence, read N- to C-terminus: tRNA(Ile)-lysidine synthase (533 aa).

Position 27-32 (27-32) interacts with ATP; that stretch reads SGGSDS.

Belongs to the tRNA(Ile)-lysidine synthase family.

The protein localises to the cytoplasm. The enzyme catalyses cytidine(34) in tRNA(Ile2) + L-lysine + ATP = lysidine(34) in tRNA(Ile2) + AMP + diphosphate + H(+). Functionally, ligates lysine onto the cytidine present at position 34 of the AUA codon-specific tRNA(Ile) that contains the anticodon CAU, in an ATP-dependent manner. Cytidine is converted to lysidine, thus changing the amino acid specificity of the tRNA from methionine to isoleucine. The polypeptide is tRNA(Ile)-lysidine synthase (Rickettsia peacockii (strain Rustic)).